The sequence spans 145 residues: uncharacterized protein (145 aa).

To B.subtilis XkdJ.

This is an uncharacterized protein from Bacillus subtilis (strain 168).